Reading from the N-terminus, the 331-residue chain is Nucleotide sugar transporter SLC35B4 (331 aa).

11 consecutive transmembrane segments (helical) span residues 4-24 (ALAV…LELL), 30-50 (GCGN…GFLF), 59-79 (PAIP…VSVV), 92-112 (LHMI…IIIL), 117-137 (SIFK…CTFM), 153-173 (GFQA…ALLM), 201-221 (ALPL…AVLF), 229-249 (IPVI…NIIT), 251-267 (YVCI…CASL), 268-288 (TVTL…ILYF), and 291-311 (PFTL…LMYT). Positions 326–331 (KDSKKN) match the Mediates endoplasmic reticulum retention motif.

The protein belongs to the nucleotide-sugar transporter family. SLC35B subfamily.

It localises to the endoplasmic reticulum membrane. The enzyme catalyses UDP-N-acetyl-alpha-D-glucosamine(in) + UDP-alpha-D-glucuronate(out) = UDP-N-acetyl-alpha-D-glucosamine(out) + UDP-alpha-D-glucuronate(in). The catalysed reaction is UDP-alpha-D-xylose(in) + UDP-alpha-D-glucuronate(out) = UDP-alpha-D-xylose(out) + UDP-alpha-D-glucuronate(in). Functionally, antiporter that transports nucleotide sugars across the endoplasmic reticulum (ER) membrane in exchange for another nucleotide sugar. May couple UDP-alpha-D-glucuronate (UDP-GlcA) or UDP-alpha-D-xylose (UDP-Xyl) efflux to UDP-alpha-D-glucuronate (UDP-GlcA) influx into the ER lumen, which in turn stimulates glucuronidation and excretion of endobiotics and xenobiotics. Has UDP-GlcA:UDP-GlcNAc antiporter activity. This Homo sapiens (Human) protein is Nucleotide sugar transporter SLC35B4 (SLC35B4).